The primary structure comprises 176 residues: ATP synthase subunit b, chloroplastic (176 aa).

Residues leucine 19–leucine 39 traverse the membrane as a helical segment.

This sequence belongs to the ATPase B chain family. As to quaternary structure, F-type ATPases have 2 components, F(1) - the catalytic core - and F(0) - the membrane proton channel. F(1) has five subunits: alpha(3), beta(3), gamma(1), delta(1), epsilon(1). F(0) has four main subunits: a(1), b(1), b'(1) and c(10-14). The alpha and beta chains form an alternating ring which encloses part of the gamma chain. F(1) is attached to F(0) by a central stalk formed by the gamma and epsilon chains, while a peripheral stalk is formed by the delta, b and b' chains.

It is found in the plastid. The protein resides in the chloroplast thylakoid membrane. Its function is as follows. F(1)F(0) ATP synthase produces ATP from ADP in the presence of a proton or sodium gradient. F-type ATPases consist of two structural domains, F(1) containing the extramembraneous catalytic core and F(0) containing the membrane proton channel, linked together by a central stalk and a peripheral stalk. During catalysis, ATP synthesis in the catalytic domain of F(1) is coupled via a rotary mechanism of the central stalk subunits to proton translocation. Functionally, component of the F(0) channel, it forms part of the peripheral stalk, linking F(1) to F(0). The sequence is that of ATP synthase subunit b, chloroplastic from Galdieria sulphuraria (Red alga).